The chain runs to 190 residues: Protein LIGHT-DEPENDENT SHORT HYPOCOTYLS 1 (190 aa).

Residues 1 to 26 (MDLISHQPNKNPNSSTQLTPPSSSRY) are compositionally biased toward polar residues. Disordered stretches follow at residues 1 to 28 (MDLI…RYEN) and 145 to 190 (GVSY…GATV). The 128-residue stretch at 25 to 152 (RYENQKRRDW…ARGVSYEKKR (128 aa)) folds into the ALOG domain. The Nuclear localization signal motif lies at 150-154 (KKRKR). The segment covering 158–179 (QKPQTQPPLQLQQQQQQPQQGQ) has biased composition (low complexity). The segment covering 180 to 190 (SMMANYSGATV) has biased composition (polar residues).

Belongs to the plant homeotic and developmental regulators ALOG protein family. As to expression, expressed in hypocotyls, shoot apices and lateral root primordia and, weakly, in vascular tissues.

It localises to the nucleus. Probable transcription regulator that acts as a developmental regulator by promoting cell growth in response to continuous red (cR), far-red (cFR) and blue (cB) light in a phytochrome-dependent manner, at least during seedling development. This chain is Protein LIGHT-DEPENDENT SHORT HYPOCOTYLS 1 (LSH1), found in Arabidopsis thaliana (Mouse-ear cress).